Here is an 894-residue protein sequence, read N- to C-terminus: Translation initiation factor IF-2 (894 aa).

Positions 47–305 (AHLNRENGSG…GSALQQSFQK (259 aa)) are disordered. Over residues 68–82 (STLNIPGTGGKSKSV) the composition is skewed to polar residues. Basic and acidic residues-rich tracts occupy residues 93 to 159 (VKRD…KDKV) and 166 to 219 (DMTK…KWTD). The span at 254 to 269 (GRSRNAKAARPAKKGN) shows a compositional bias: basic residues. Over residues 270–283 (KHSESKADREEARA) the composition is skewed to basic and acidic residues. One can recognise a tr-type G domain in the interval 393–562 (PRAPVVTIMG…LLQAEVLELK (170 aa)). A G1 region spans residues 402-409 (GHVDHGKT). 402–409 (GHVDHGKT) lines the GTP pocket. The segment at 427–431 (GITQH) is G2. Residues 448 to 451 (DTPG) form a G3 region. GTP contacts are provided by residues 448 to 452 (DTPGH) and 502 to 505 (NKID). Positions 502-505 (NKID) are G4. Positions 538 to 540 (SAK) are G5.

It belongs to the TRAFAC class translation factor GTPase superfamily. Classic translation factor GTPase family. IF-2 subfamily.

It localises to the cytoplasm. In terms of biological role, one of the essential components for the initiation of protein synthesis. Protects formylmethionyl-tRNA from spontaneous hydrolysis and promotes its binding to the 30S ribosomal subunits. Also involved in the hydrolysis of GTP during the formation of the 70S ribosomal complex. This chain is Translation initiation factor IF-2, found in Citrobacter koseri (strain ATCC BAA-895 / CDC 4225-83 / SGSC4696).